The following is a 223-amino-acid chain: MYKLSKTTPFFFRRAFLCGRRGGYPESNLSNFGRPTASTLSTSQSSGICETNDYSNKPYFFQVKFEDRFSKKIDKFNECFRHFYYSHGGQQYMDKFESIFDNWEHEFSKTRGFRSPKTFINESDKGIEIRVELPGFSKENVKIDFSNGLLNIDALNKNTTIQQPSSNNQQVESQHQSLMEFKKSIKLPEDIDVSLIKAIMNNGILEISIPKNSYVKSTTINVQ.

A mitochondrion-targeting transit peptide spans 1–23; the sequence is MYKLSKTTPFFFRRAFLCGRRGG. Residues 109 to 223 form the sHSP domain; the sequence is KTRGFRSPKT…YVKSTTINVQ (115 aa).

This sequence belongs to the small heat shock protein (HSP20) family.

The protein localises to the mitochondrion. The chain is Small heat shock protein hspI, mitochondrial (hspI) from Dictyostelium discoideum (Social amoeba).